The following is a 454-amino-acid chain: Pyrrolysine--tRNA ligase (454 aa).

A disordered region spans residues 102–138; it reads TRTKKAMPKSVARAPKPLENTEAAQAQPSGSKFSPAI. The span at 123–133 shows a compositional bias: polar residues; sequence EAAQAQPSGSK.

Belongs to the class-II aminoacyl-tRNA synthetase family.

The protein localises to the cytoplasm. The catalysed reaction is tRNA(Pyl) + L-pyrrolysine + ATP = L-pyrrolysyl-tRNA(Pyl) + AMP + diphosphate. In terms of biological role, catalyzes the attachment of pyrrolysine to tRNA(Pyl). Pyrrolysine is a lysine derivative encoded by the termination codon UAG. The chain is Pyrrolysine--tRNA ligase from Methanosarcina mazei (strain ATCC BAA-159 / DSM 3647 / Goe1 / Go1 / JCM 11833 / OCM 88) (Methanosarcina frisia).